Here is a 340-residue protein sequence, read N- to C-terminus: tRNA-dihydrouridine(20/20a) synthase (340 aa).

FMN-binding positions include 22–24 (PMM) and Q75. Catalysis depends on C105, which acts as the Proton donor. FMN-binding positions include K144, H177, 217-219 (NGG), and 239-240 (GR).

It belongs to the Dus family. DusA subfamily. It depends on FMN as a cofactor.

The catalysed reaction is 5,6-dihydrouridine(20) in tRNA + NADP(+) = uridine(20) in tRNA + NADPH + H(+). It carries out the reaction 5,6-dihydrouridine(20) in tRNA + NAD(+) = uridine(20) in tRNA + NADH + H(+). It catalyses the reaction 5,6-dihydrouridine(20a) in tRNA + NADP(+) = uridine(20a) in tRNA + NADPH + H(+). The enzyme catalyses 5,6-dihydrouridine(20a) in tRNA + NAD(+) = uridine(20a) in tRNA + NADH + H(+). Its function is as follows. Catalyzes the synthesis of 5,6-dihydrouridine (D), a modified base found in the D-loop of most tRNAs, via the reduction of the C5-C6 double bond in target uridines. Specifically modifies U20 and U20a in tRNAs. In Xylella fastidiosa (strain 9a5c), this protein is tRNA-dihydrouridine(20/20a) synthase.